Reading from the N-terminus, the 282-residue chain is 4-diphosphocytidyl-2-C-methyl-D-erythritol kinase (282 aa).

Residue Lys9 is part of the active site. ATP is bound at residue 98–108 (PMGGGLGGGSS). Asp140 is a catalytic residue.

The protein belongs to the GHMP kinase family. IspE subfamily. Homodimer.

It carries out the reaction 4-CDP-2-C-methyl-D-erythritol + ATP = 4-CDP-2-C-methyl-D-erythritol 2-phosphate + ADP + H(+). The protein operates within isoprenoid biosynthesis; isopentenyl diphosphate biosynthesis via DXP pathway; isopentenyl diphosphate from 1-deoxy-D-xylulose 5-phosphate: step 3/6. Its function is as follows. Catalyzes the phosphorylation of the position 2 hydroxy group of 4-diphosphocytidyl-2C-methyl-D-erythritol. This chain is 4-diphosphocytidyl-2-C-methyl-D-erythritol kinase, found in Salmonella paratyphi B (strain ATCC BAA-1250 / SPB7).